The chain runs to 405 residues: Aurora kinase A (405 aa).

Composition is skewed to polar residues over residues 32–82 (VPSQ…QLQA) and 91–110 (RSLN…PGNN). Residues 32–127 (VPSQNPLSAN…KQKNEESKKR (96 aa)) form a disordered region. Ser42 and Ser52 each carry phosphoserine. The span at 111–127 (SEKELATKQKNEESKKR) shows a compositional bias: basic and acidic residues. One can recognise a Protein kinase domain in the interval 134-384 (FEIGRPLGKG…LKDVLEHPWI (251 aa)). Residues Lys144, Lys163, and 212–214 (EYA) contribute to the ATP site. The Proton acceptor role is filled by Asp257. A Glycyl lysine isopeptide (Lys-Gly) (interchain with G-Cter in SUMO2) cross-link involves residue Lys259. Residues 261–262 (EN) and Asp275 contribute to the ATP site. Residues 281–294 (HAPSSRRTTLCGTL) form an activation segment region. Phosphothreonine is present on residues Thr288 and Thr289. The residue at position 343 (Ser343) is a Phosphoserine. The tract at residues 385 to 405 (MANSSKPSSSQKSKDSTSKQS) is disordered. The segment covering 396–405 (KSKDSTSKQS) has biased composition (basic and acidic residues).

It belongs to the protein kinase superfamily. Ser/Thr protein kinase family. Aurora subfamily. As to quaternary structure, part of a complex composed of NEDD9, AURKA and CTTN; within the complex NEDD9 acts as a scaffold protein and is required for complex formation. Identified in a complex with AUNIP and NIN. Interacts with FBXL7. Interacts with CPEB1, JTB, TACC1, TPX2, PPP2CA, as well as with the protein phosphatase type 1 (PP1) isoforms PPP1CA, PPP1CB and PPP1CC. Also interacts with its substrates ARHGEF2, BORA, KIF2A, PARD3, and p53/TP53. Interaction with BORA promotes phosphorylation of PLK1. Interacts with CIMAP3. Interacts with GADD45A, competing with its oligomerization. Interacts (via C-terminus) with AUNIP (via C-terminus). Interacts with FRY; this interaction facilitates AURKA-mediated PLK1 phosphorylation. Interacts with SIRT2. Interacts with MYCN; interaction is phospho-independent and triggers AURKA activation; AURKA competes with FBXW7 for binding to unphosphorylated MYCN but not for binding to phosphorylated MYCN. Interacts with HNRNPU. Interacts with AAAS. Interacts with KLHL18 and CUL3. Interacts with FOXP1. Interacts with HDAC6; AURKA-mediated phosphorylation of HDAC6 promotes deacetylation of alpha-tubulin. Post-translationally, activated by phosphorylation at Thr-289; this brings about a change in the conformation of the activation segment. Phosphorylation at Thr-289 varies during the cell cycle and is highest during M phase. Autophosphorylated at Thr-289 upon TPX2 binding. Thr-289 can be phosphorylated by several kinases, including PAK and PKA. Protein phosphatase type 1 (PP1) binds AURKA and inhibits its activity by dephosphorylating Thr-289 during mitosis. Phosphorylation at Ser-343 decreases the kinase activity. PPP2CA controls degradation by dephosphorylating Ser-52 at the end of mitosis. Ubiquitinated by the E3 ubiquitin-protein ligase complex SCF(FBXL7) during mitosis, leading to its degradation by the proteasome. Ubiquitinated by CHFR, leading to its degradation by the proteasome. Ubiquitinated by the anaphase-promoting complex (APC), leading to its degradation by the proteasome. Ubiquitinated by the CUL3-KLHL18 ligase leading to its activation at the centrosome which is required for initiating mitotic entry. Ubiquitination mediated by CUL3-KLHL18 ligase does not lead to its degradation by the proteasome.

The protein resides in the cytoplasm. Its subcellular location is the cytoskeleton. It localises to the microtubule organizing center. The protein localises to the centrosome. It is found in the spindle pole. The protein resides in the centriole. Its subcellular location is the cell projection. It localises to the neuron projection. The protein localises to the cilium. It is found in the cilium basal body. The protein resides in the basolateral cell membrane. The catalysed reaction is L-seryl-[protein] + ATP = O-phospho-L-seryl-[protein] + ADP + H(+). It carries out the reaction L-threonyl-[protein] + ATP = O-phospho-L-threonyl-[protein] + ADP + H(+). Its activity is regulated as follows. Activation of CDK1, appears to be an upstream event of AURKA activation. Phosphatase inhibitor-2 (PPP1R2) and TPX2 act also as activators. Inactivated by the G2 checkpoint. Inhibited by GADD45A and p53/TP53, and through dephosphorylation by protein phosphatase type 1 (PP1). MLN8054 is also a potent and selective inhibitor. Activated during the early phase of cilia disassembly in the presence of CIMAP3. Inhibited by the small molecule inhibitor VX-680. Functionally, mitotic serine/threonine kinase that contributes to the regulation of cell cycle progression. Associates with the centrosome and the spindle microtubules during mitosis and plays a critical role in various mitotic events including the establishment of mitotic spindle, centrosome duplication, centrosome separation as well as maturation, chromosomal alignment, spindle assembly checkpoint, and cytokinesis. Required for normal spindle positioning during mitosis and for the localization of NUMA1 and DCTN1 to the cell cortex during metaphase. Required for initial activation of CDK1 at centrosomes. Phosphorylates numerous target proteins, including ARHGEF2, BORA, BRCA1, CDC25B, DLGP5, HDAC6, KIF2A, LATS2, NDEL1, PARD3, PPP1R2, PLK1, RASSF1, TACC3, p53/TP53 and TPX2. Phosphorylates MCRS1 which is required for MCRS1-mediated kinetochore fiber assembly and mitotic progression. Regulates KIF2A tubulin depolymerase activity. Important for microtubule formation and/or stabilization. Required for normal axon formation. Plays a role in microtubule remodeling during neurite extension. Also acts as a key regulatory component of the p53/TP53 pathway, and particularly the checkpoint-response pathways critical for oncogenic transformation of cells, by phosphorylating and destabilizing p53/TP53. Phosphorylates its own inhibitors, the protein phosphatase type 1 (PP1) isoforms, to inhibit their activity. Inhibits cilia outgrowth. Required for cilia disassembly via phosphorylation of HDAC6 and subsequent deacetylation of alpha-tubulin. Regulates protein levels of the anti-apoptosis protein BIRC5 by suppressing the expression of the SCF(FBXL7) E3 ubiquitin-protein ligase substrate adapter FBXL7 through the phosphorylation of the transcription factor FOXP1. This is Aurora kinase A from Canis lupus familiaris (Dog).